The following is a 597-amino-acid chain: UvrABC system protein C (597 aa).

The region spanning 15–93 (DNPGVYQYYD…IKTLQPRYNV (79 aa)) is the GIY-YIG domain. The UVR domain maps to 207–242 (KESLKDFKKLMNNYAQNLQFEEAQKIKEKIEVLENY).

Belongs to the UvrC family. As to quaternary structure, interacts with UvrB in an incision complex.

It localises to the cytoplasm. Its function is as follows. The UvrABC repair system catalyzes the recognition and processing of DNA lesions. UvrC both incises the 5' and 3' sides of the lesion. The N-terminal half is responsible for the 3' incision and the C-terminal half is responsible for the 5' incision. The polypeptide is UvrABC system protein C (Flavobacterium johnsoniae (strain ATCC 17061 / DSM 2064 / JCM 8514 / BCRC 14874 / CCUG 350202 / NBRC 14942 / NCIMB 11054 / UW101) (Cytophaga johnsonae)).